The sequence spans 1100 residues: Sorbin and SH3 domain-containing protein 2 (1100 aa).

Tyrosine 13, serine 14, histidine 27, glycine 28, serine 30, and serine 43 each carry phosphoserine. Residues serine 30–isoleucine 52 show a composition bias toward polar residues. A disordered region spans residues serine 30–serine 57. A SoHo domain is found at valine 66–glycine 127. Over residues serine 134 to arginine 147 the composition is skewed to polar residues. The segment at serine 134 to aspartate 311 is disordered. Position 153 is an alanine amide (histidine 153). Phosphoserine is present on residues serine 154 and serine 157. Residues proline 167–leucine 180 show a composition bias toward pro residues. A compositionally biased stretch (basic and acidic residues) spans arginine 181–proline 217. Serine 234 and isoleucine 236 each carry phosphothreonine. Serine 239, serine 245, serine 248, lysine 258, serine 259, and glutamate 260 each carry phosphoserine. 3 positions are modified to phosphothreonine: threonine 277, glycine 280, and valine 282. Residue serine 287 is modified to Phosphoserine. Residues serine 287–serine 304 are compositionally biased toward low complexity. A Phosphothreonine modification is found at threonine 292. Residues phenylalanine 295, serine 297, serine 298, serine 299, serine 301, serine 302, serine 304, alanine 306, aspartate 311, and proline 316 each carry the phosphoserine modification. Serine 320, serine 322, and glycine 326 each carry phosphothreonine. Phosphoserine is present on residues histidine 341, valine 344, and arginine 346. Position 366 is a phosphothreonine (glutamate 366). 2 positions are modified to phosphoserine: serine 381 and serine 383. Phosphothreonine occurs at positions 413 and 415. Arginine 437 and arginine 439 each carry phosphoserine. Isoleucine 459 bears the Phosphothreonine mark. Lysine 474, serine 494, serine 497, serine 550, and serine 750 each carry phosphoserine. The disordered stretch occupies residues arginine 807–leucine 866. Polar residues predominate over residues alanine 812–cysteine 824. Residues histidine 825–proline 839 show a composition bias toward basic and acidic residues. Position 843 is a phosphoserine (serine 843). Basic and acidic residues predominate over residues alanine 853–leucine 866. SH3 domains lie at lysine 863–proline 922 and glycine 938–lysine 999. Phosphoserine is present on residues serine 1017 and serine 1023. Residues glycine 1041 to leucine 1100 form the SH3 3 domain.

Interacts with ABL, CBL, DNM1, DNM2, FLOT1, AFDN, PTK2B/PYK2, SAPAP, SPTAN1, SYNJ1, SYNJ2, VCL/vinculin and WASF. Interacts with ABL1/c-Abl, ABL2/v-Abl/Arg, ACTN, CBL and PALLD. Interacts with PTPN12 and WASF1 via its SH3 domains; this interaction may mediate the partial PTPN12 and WASF1 translocation to focal adhesion sites. Post-translationally, ubiquitinated by CBL. Dephosphorylated by PTPN12. In terms of tissue distribution, abundantly expressed in heart. In cardiac muscle cells, located in the Z-disks of sarcomere. Also found, but to a lower extent, in small and large intestine, pancreas, thymus, colon, spleen, prostate, testis, brain, ovary and epithelial cells. In the pancreas, mainly expressed in acinar cells, duct cells and all cell types in islets (at protein level). Tends to be down-regulated in pancreatic adenocarcinomas ans metastases.

Its subcellular location is the cytoplasm. It localises to the perinuclear region. It is found in the apical cell membrane. The protein resides in the cell junction. The protein localises to the focal adhesion. Its subcellular location is the cell projection. It localises to the lamellipodium. In terms of biological role, adapter protein that plays a role in the assembling of signaling complexes, being a link between ABL kinases and actin cytoskeleton. Can form complex with ABL1 and CBL, thus promoting ubiquitination and degradation of ABL1. May play a role in the regulation of pancreatic cell adhesion, possibly by acting on WASF1 phosphorylation, enhancing phosphorylation by ABL1, as well as dephosphorylation by PTPN12. Isoform 6 increases water and sodium absorption in the intestine and gall-bladder. The protein is Sorbin and SH3 domain-containing protein 2 (SORBS2) of Homo sapiens (Human).